We begin with the raw amino-acid sequence, 265 residues long: Transcription factor BHLH062 (265 aa).

A disordered region spans residues 1–26; sequence MVPRDRVNAAAAGGGGEGRLVQSGIV. The interval 35 to 48 is basic motif; degenerate; that stretch reads PKRIHKSEREKLKR. The region spanning 35–85 is the bHLH domain; that stretch reads PKRIHKSEREKLKRDKQNDLFNELGNLLEPDRQNNGKACVLGETTRILKDL. Residues 49 to 85 form a helix-loop-helix motif region; that stretch reads DKQNDLFNELGNLLEPDRQNNGKACVLGETTRILKDL. The stretch at 75-130 forms a coiled coil; sequence LGETTRILKDLLSQVESLRKENSSLKNESHYVALERNELHDDNSMLRTEILELQNE. A disordered region spans residues 200–265; it reads ESATSEDSEP…TNEEDRIGRS (66 aa). Residues 210-220 show a composition bias toward basic and acidic residues; the sequence is SQEHGISDHVT. Positions 245 to 256 are enriched in polar residues; sequence QDQQCSSGTSGT.

It belongs to the bHLH protein family. Interacts with TIFY11A/JAZ9.

It localises to the nucleus. Transcription factor that plays a positive role in salt stress tolerance. Interacts with TIFY11A/JAZ9 and binds to the promoter of some potassium ion transporter genes to regulate potassium homeostasis during salt stress. The chain is Transcription factor BHLH062 from Oryza sativa subsp. japonica (Rice).